The chain runs to 609 residues: Dihydroxy-acid dehydratase (609 aa).

Asp-81 contributes to the Mg(2+) binding site. Cys-122 is a [2Fe-2S] cluster binding site. Mg(2+) contacts are provided by Asp-123 and Lys-124. Lys-124 bears the N6-carboxylysine mark. Cys-195 contacts [2Fe-2S] cluster. A Mg(2+)-binding site is contributed by Glu-491. Ser-517 functions as the Proton acceptor in the catalytic mechanism.

Belongs to the IlvD/Edd family. In terms of assembly, homodimer. [2Fe-2S] cluster is required as a cofactor. It depends on Mg(2+) as a cofactor.

The catalysed reaction is (2R)-2,3-dihydroxy-3-methylbutanoate = 3-methyl-2-oxobutanoate + H2O. The enzyme catalyses (2R,3R)-2,3-dihydroxy-3-methylpentanoate = (S)-3-methyl-2-oxopentanoate + H2O. The protein operates within amino-acid biosynthesis; L-isoleucine biosynthesis; L-isoleucine from 2-oxobutanoate: step 3/4. It functions in the pathway amino-acid biosynthesis; L-valine biosynthesis; L-valine from pyruvate: step 3/4. In terms of biological role, functions in the biosynthesis of branched-chain amino acids. Catalyzes the dehydration of (2R,3R)-2,3-dihydroxy-3-methylpentanoate (2,3-dihydroxy-3-methylvalerate) into 2-oxo-3-methylpentanoate (2-oxo-3-methylvalerate) and of (2R)-2,3-dihydroxy-3-methylbutanoate (2,3-dihydroxyisovalerate) into 2-oxo-3-methylbutanoate (2-oxoisovalerate), the penultimate precursor to L-isoleucine and L-valine, respectively. This is Dihydroxy-acid dehydratase from Acinetobacter baumannii (strain AB307-0294).